A 530-amino-acid chain; its full sequence is Glucocorticoid modulatory element-binding protein 2 (530 aa).

Positions 81–163 (EEGENLEAEI…RKIMDSGELD (83 aa)) constitute an SAND domain. C110 contributes to the Zn(2+) binding site. Positions 136, 140, 143, and 154 each coordinate DNA. K155 participates in a covalent cross-link: Glycyl lysine isopeptide (Lys-Gly) (interchain with G-Cter in SUMO1); alternate. Residue K155 forms a Glycyl lysine isopeptide (Lys-Gly) (interchain with G-Cter in SUMO2); alternate linkage. Zn(2+) is bound by residues H167, C171, and C175. Positions 304–348 (QMDRSREQYARDLAALEQQCDEHRRRAKELKHKSQHLSNVLMTLT) form a coiled coil. Residue S373 is modified to Phosphoserine.

Homodimer, and heterodimer of GMEB1 and GMEB2. GMEB1 and GMEB2 form the parvovirus initiator complex (PIF). Interacts with the glucocorticoid receptor (NR3C1). May interact with CREB-binding protein (CBP). Expressed in peripheral blood lymphocytes and fetal liver. Expressed preferentially in reproductive and/or developmentally important cells, such as testis, placenta, bone marrow and fetal tissues.

It is found in the nucleus. It localises to the cytoplasm. Trans-acting factor that binds to glucocorticoid modulatory elements (GME) present in the TAT (tyrosine aminotransferase) promoter and increases sensitivity to low concentrations of glucocorticoids. Also binds to the transferrin receptor promoter. Essential auxiliary factor for the replication of parvoviruses. In Homo sapiens (Human), this protein is Glucocorticoid modulatory element-binding protein 2 (GMEB2).